Here is a 291-residue protein sequence, read N- to C-terminus: Transcription factor bHLH53 (291 aa).

The 50-residue stretch at 163 to 212 (PTLSSQSIAARGRRRRIAEKTHELGKLIPGGNKLNTAEMFQAAAKYVKFL) folds into the bHLH domain.

In terms of assembly, homodimer. Expressed constitutively in roots, leaves, stems, and flowers.

The protein localises to the nucleus. The polypeptide is Transcription factor bHLH53 (BHLH53) (Arabidopsis thaliana (Mouse-ear cress)).